The chain runs to 398 residues: Acetate kinase (398 aa).

A Mg(2+)-binding site is contributed by Asn-8. Residue Lys-15 coordinates ATP. Arg-89 contributes to the substrate binding site. The active-site Proton donor/acceptor is the Asp-146. ATP contacts are provided by residues 206–210 (HIGNG), 283–285 (DMR), and 331–335 (GMGEN). Glu-383 contributes to the Mg(2+) binding site.

The protein belongs to the acetokinase family. Homodimer. The cofactor is Mg(2+). Requires Mn(2+) as cofactor.

The protein resides in the cytoplasm. It carries out the reaction acetate + ATP = acetyl phosphate + ADP. Its pathway is metabolic intermediate biosynthesis; acetyl-CoA biosynthesis; acetyl-CoA from acetate: step 1/2. Its function is as follows. Catalyzes the formation of acetyl phosphate from acetate and ATP. Can also catalyze the reverse reaction. The sequence is that of Acetate kinase from Streptococcus pyogenes serotype M6 (strain ATCC BAA-946 / MGAS10394).